The primary structure comprises 217 residues: Elongation factor Ts (217 aa).

Residues 81–84 (TDFV) are involved in Mg(2+) ion dislocation from EF-Tu.

This sequence belongs to the EF-Ts family.

It is found in the cytoplasm. Its function is as follows. Associates with the EF-Tu.GDP complex and induces the exchange of GDP to GTP. It remains bound to the aminoacyl-tRNA.EF-Tu.GTP complex up to the GTP hydrolysis stage on the ribosome. The protein is Elongation factor Ts of Myxococcus xanthus (strain DK1622).